The sequence spans 95 residues: Aspartyl/glutamyl-tRNA(Asn/Gln) amidotransferase subunit C (95 aa).

It belongs to the GatC family. In terms of assembly, heterotrimer of A, B and C subunits.

It carries out the reaction L-glutamyl-tRNA(Gln) + L-glutamine + ATP + H2O = L-glutaminyl-tRNA(Gln) + L-glutamate + ADP + phosphate + H(+). The catalysed reaction is L-aspartyl-tRNA(Asn) + L-glutamine + ATP + H2O = L-asparaginyl-tRNA(Asn) + L-glutamate + ADP + phosphate + 2 H(+). In terms of biological role, allows the formation of correctly charged Asn-tRNA(Asn) or Gln-tRNA(Gln) through the transamidation of misacylated Asp-tRNA(Asn) or Glu-tRNA(Gln) in organisms which lack either or both of asparaginyl-tRNA or glutaminyl-tRNA synthetases. The reaction takes place in the presence of glutamine and ATP through an activated phospho-Asp-tRNA(Asn) or phospho-Glu-tRNA(Gln). The protein is Aspartyl/glutamyl-tRNA(Asn/Gln) amidotransferase subunit C of Cytophaga hutchinsonii (strain ATCC 33406 / DSM 1761 / CIP 103989 / NBRC 15051 / NCIMB 9469 / D465).